A 286-amino-acid polypeptide reads, in one-letter code: Cytochrome bo(3) ubiquinol oxidase subunit 2 (286 aa).

The first 24 residues, 1–24 (MQFIKYKSYILKFLLVSCIFCING), serve as a signal peptide directing secretion. C25 carries the N-palmitoyl cysteine lipid modification. Residue C25 is the site of S-diacylglycerol cysteine attachment. Topologically, residues 25–44 (CDCTILCPNGLIAQEQRFVL) are extracellular. Residues 45 to 67 (FVSFFTMLLIIIPVIFMTIFFVL) form a helical membrane-spanning segment. The Cytoplasmic segment spans residues 68–85 (RYRESNFSKTYDPKWSHS). Residues 86–108 (NIIELLIWGIPIIIIVFLSIFSW) form a helical membrane-spanning segment. Topologically, residues 109–286 (KSVHDLDPKK…VIANVLKISL (178 aa)) are extracellular.

The protein belongs to the cytochrome c oxidase subunit 2 family. In terms of assembly, heterooctamer of two A chains, two B chains, two C chains and two D chains.

The protein resides in the cell membrane. Cytochrome bo(3) ubiquinol terminal oxidase is the component of the aerobic respiratory chain of E.coli that predominates when cells are grown at high aeration. Has proton pump activity across the membrane in addition to electron transfer, pumping 2 protons/electron. The polypeptide is Cytochrome bo(3) ubiquinol oxidase subunit 2 (cyoA) (Buchnera aphidicola subsp. Baizongia pistaciae (strain Bp)).